The chain runs to 165 residues: Probable deoxyuridine 5'-triphosphate nucleotidohydrolase (165 aa).

Residues 39 to 49 (GRIDTDGKTIG) show a composition bias toward basic and acidic residues. Positions 39–64 (GRIDTDGKTIGDRSPVTPTADEDSTD) are disordered.

This sequence belongs to the dCTP deaminase family. Archaeal dUTPase subfamily.

It carries out the reaction dUTP + H2O = dUMP + diphosphate + H(+). The protein operates within pyrimidine metabolism; dUMP biosynthesis; dUMP from dCTP (dUTP route): step 2/2. This enzyme is involved in nucleotide metabolism: it produces dUMP, the immediate precursor of thymidine nucleotides and it decreases the intracellular concentration of dUTP so that uracil cannot be incorporated into DNA. This Halobacterium salinarum (strain ATCC 29341 / DSM 671 / R1) protein is Probable deoxyuridine 5'-triphosphate nucleotidohydrolase.